A 426-amino-acid polypeptide reads, in one-letter code: Synaptotagmin-13 (426 aa).

At 1-6 (MVLSVP) the chain is on the vesicular side. A helical transmembrane segment spans residues 7 to 29 (VIALGATLGTATSILALCGVTCL). Over 30 to 426 (CRHMHPKKGL…QIAMWHQLHL (397 aa)) the chain is Cytoplasmic. 2 C2 domains span residues 158-275 (QAPK…AQWG) and 287-422 (GAGE…AMWH).

Belongs to the synaptotagmin family. In terms of assembly, interacts with NRXN1. Expressed in brain, pancreas and kidney.

It localises to the membrane. In terms of biological role, may be involved in transport vesicle docking to the plasma membrane. The protein is Synaptotagmin-13 (SYT13) of Homo sapiens (Human).